The following is a 427-amino-acid chain: Enolase (427 aa).

Gln163 is a (2R)-2-phosphoglycerate binding site. Glu205 functions as the Proton donor in the catalytic mechanism. 3 residues coordinate Mg(2+): Asp242, Glu285, and Asp312. Positions 337, 366, 367, and 388 each coordinate (2R)-2-phosphoglycerate. Lys337 functions as the Proton acceptor in the catalytic mechanism.

The protein belongs to the enolase family. It depends on Mg(2+) as a cofactor.

The protein resides in the cytoplasm. It is found in the secreted. The protein localises to the cell surface. It carries out the reaction (2R)-2-phosphoglycerate = phosphoenolpyruvate + H2O. Its pathway is carbohydrate degradation; glycolysis; pyruvate from D-glyceraldehyde 3-phosphate: step 4/5. Catalyzes the reversible conversion of 2-phosphoglycerate (2-PG) into phosphoenolpyruvate (PEP). It is essential for the degradation of carbohydrates via glycolysis. The sequence is that of Enolase from Paraburkholderia phymatum (strain DSM 17167 / CIP 108236 / LMG 21445 / STM815) (Burkholderia phymatum).